A 510-amino-acid chain; its full sequence is 2,3-bisphosphoglycerate-independent phosphoglycerate mutase (510 aa).

The Mn(2+) site is built by Asp12 and Ser62. The active-site Phosphoserine intermediate is Ser62. Substrate-binding positions include His123, 153–154 (RD), Arg185, Arg191, 260–263 (RPDR), and Lys335. Mn(2+) contacts are provided by Asp402, His406, Asp443, His444, and His461.

The protein belongs to the BPG-independent phosphoglycerate mutase family. Monomer. Mn(2+) serves as cofactor.

It carries out the reaction (2R)-2-phosphoglycerate = (2R)-3-phosphoglycerate. Its pathway is carbohydrate degradation; glycolysis; pyruvate from D-glyceraldehyde 3-phosphate: step 3/5. Its function is as follows. Catalyzes the interconversion of 2-phosphoglycerate and 3-phosphoglycerate. The chain is 2,3-bisphosphoglycerate-independent phosphoglycerate mutase from Listeria monocytogenes serovar 1/2a (strain ATCC BAA-679 / EGD-e).